Here is a 420-residue protein sequence, read N- to C-terminus: Caspase-12 (420 aa).

Residues 1–92 (MAAKRTHERD…QLSLQFPSDD (92 aa)) form the CARD domain. A phosphoserine mark is found at S85 and S90. The interval 93 to 115 (EEDELQKMFTPSSASESRGKVED) is disordered. Active-site residues include H251 and C299.

It belongs to the peptidase C14A family. Heterotetramer that consists of two anti-parallel arranged heterodimers, each one formed by two subunits (Potential). May interact with TRAF2.

Functionally, involved in the activation cascade of caspases responsible for apoptosis execution. This chain is Caspase-12 (Casp12), found in Rattus norvegicus (Rat).